A 1104-amino-acid polypeptide reads, in one-letter code: Receptor-type guanylate cyclase gcy-15 (1104 aa).

The Extracellular portion of the chain corresponds to 1 to 431; it reads MEIAINRLNA…ENCGPPANNT (431 aa). N-linked (GlcNAc...) asparagine glycans are attached at residues Asn43, Asn237, Asn263, Asn287, Asn407, and Asn429. A helical transmembrane segment spans residues 432–452; the sequence is FIIVISVGVAVLIGLAIAAAF. At 453–1104 the chain is on the cytoplasmic side; the sequence is LYKRYRYERR…QIQEKTYEFS (652 aa). Residues 528-823 enclose the Protein kinase domain; that stretch reads FNTGSTARAG…QIKRKLKPLT (296 aa). ATP-binding positions include 534 to 542 and Lys576; that span reads ARAGPFGPI. Residues 838 to 871 adopt a coiled-coil conformation; it reads IEKYTDKLEKDIAERNEELEAEKAKSEALLKMML. One can recognise a Guanylate cyclase domain in the interval 894 to 1024; sequence TVFFSDCPGF…DTVNTASRME (131 aa).

It belongs to the adenylyl cyclase class-4/guanylyl cyclase family. Expressed bilaterally in ASG sensory neurons.

The protein localises to the cell membrane. It carries out the reaction GTP = 3',5'-cyclic GMP + diphosphate. In terms of biological role, guanylate cyclase involved in the production of the second messenger cGMP. This is Receptor-type guanylate cyclase gcy-15 from Caenorhabditis elegans.